A 209-amino-acid chain; its full sequence is Imidazole glycerol phosphate synthase subunit HisH (209 aa).

Residues 5–209 enclose the Glutamine amidotransferase type-1 domain; the sequence is AIAIIDYDMG…LRNFVALVKD (205 aa). The active-site Nucleophile is the C83. Active-site residues include H188 and E190.

Heterodimer of HisH and HisF.

The protein localises to the cytoplasm. The catalysed reaction is 5-[(5-phospho-1-deoxy-D-ribulos-1-ylimino)methylamino]-1-(5-phospho-beta-D-ribosyl)imidazole-4-carboxamide + L-glutamine = D-erythro-1-(imidazol-4-yl)glycerol 3-phosphate + 5-amino-1-(5-phospho-beta-D-ribosyl)imidazole-4-carboxamide + L-glutamate + H(+). It carries out the reaction L-glutamine + H2O = L-glutamate + NH4(+). It participates in amino-acid biosynthesis; L-histidine biosynthesis; L-histidine from 5-phospho-alpha-D-ribose 1-diphosphate: step 5/9. In terms of biological role, IGPS catalyzes the conversion of PRFAR and glutamine to IGP, AICAR and glutamate. The HisH subunit catalyzes the hydrolysis of glutamine to glutamate and ammonia as part of the synthesis of IGP and AICAR. The resulting ammonia molecule is channeled to the active site of HisF. This is Imidazole glycerol phosphate synthase subunit HisH from Thermosynechococcus vestitus (strain NIES-2133 / IAM M-273 / BP-1).